A 247-amino-acid polypeptide reads, in one-letter code: tRNA pseudouridine synthase A (247 aa).

The active-site Nucleophile is the D53. Y112 is a substrate binding site.

Belongs to the tRNA pseudouridine synthase TruA family. Homodimer.

It catalyses the reaction uridine(38/39/40) in tRNA = pseudouridine(38/39/40) in tRNA. Functionally, formation of pseudouridine at positions 38, 39 and 40 in the anticodon stem and loop of transfer RNAs. The chain is tRNA pseudouridine synthase A from Anaplasma marginale (strain Florida).